A 438-amino-acid chain; its full sequence is MRETSSREDTNNIGKAPEMSGGTIMDTMTSLPHQNDQNVIRHLTNLVKSPASGDDDIKKKEDSIMELGNILAQNKQTEELRNMIEQTRPFLVSLGKAKAAKLVRDLVDLCLKIDDQDGDIKVGLVKECIQWATEQNRTFLRQTLTARLVRLYNDLQRYTQALPLAADLIRELKKVDDKDVLVEVELEESKAYYNLSNIGRARASLTGARTTANAIYVNPRMQAALDLQSGILHAADEKDFKTAFSYFYEAFEGYDSVDEKVSALTALKYMLLCKVMLDLPDEVNSLLSAKLALKYNGSDLDAMKAIAAAAQKRSLKDFQVAFGSFPQELQMDPVVRKHFHSLSERMLEKDLCRIIEPYSFVQIEHVAQQIGIDRSKVEKKLSQMILDQKLSGSLDQGEGMLIVFEIAVPDEAYQTALDTIHAMGEVVDALYSNASKIN.

The span at 1–10 (MRETSSREDT) shows a compositional bias: basic and acidic residues. The interval 1–30 (MRETSSREDTNNIGKAPEMSGGTIMDTMTS) is disordered. The PCI domain maps to 239 to 408 (DFKTAFSYFY…GMLIVFEIAV (170 aa)).

This sequence belongs to the proteasome subunit S9 family. Component of the lid subcomplex of the 19S proteasome regulatory particle complex (also named PA700 complex). The 26S proteasome consists of a 20S proteasome core and two 19S regulatory subunits.

Functionally, component of the lid subcomplex of the 26S proteasome, a multiprotein complex involved in the ATP-dependent degradation of ubiquitinated proteins. In the complex, rpn-6.1 is required for proteasome assembly. Plays a key role in increased proteasome activity in response to proteotoxic stress: induced by daf-16, promoting enhanced assembly of the 26S proteasome and higher proteasome activity, leading to extended lifespan. The chain is Probable 26S proteasome regulatory subunit rpn-6.1 from Caenorhabditis elegans.